The primary structure comprises 352 residues: MRIEQLREHLRALGARPGHEQSVLRHWACALPQQRRSAREDVLPLALREALPALEAELQGLARLRSEHSAEDGSARLLVALADGQTVESVLLPRDGLCVSTQVGCAVGCVFCMTGQGGLLRQLGSAEIVAQVALARGHRAVKKVVFMGMGEPAHNLDNVLEAIELLGTAGGIGHKNLVFSTVGDERVFERLPQGAVKPALALSLHTTKPELRAQLLPRAPRIAPEDLVAHGERYARATGYPVQYQWTLIDGVNDGDDELDGIVRLLAGRYAVMNLIPYNTVDGLAFQRPAWERAVAMAGALHRRGVLTKLRRSAGQDVEGGCGQLRARALGGARWIKIEPVSGTGAHHVDQF.

The Proton acceptor role is filled by E88. Residues 91–317 (LLPRDGLCVS…TKLRRSAGQD (227 aa)) enclose the Radical SAM core domain. C98 and C322 are oxidised to a cystine. [4Fe-4S] cluster contacts are provided by C105, C109, and C112. S-adenosyl-L-methionine is bound by residues 150-151 (GE), S180, 203-205 (SLH), and N279. The active-site S-methylcysteine intermediate is the C322.

It belongs to the radical SAM superfamily. RlmN family. [4Fe-4S] cluster is required as a cofactor.

It is found in the cytoplasm. In Methylibium petroleiphilum (strain ATCC BAA-1232 / LMG 22953 / PM1), this protein is Probable RNA methyltransferase Mpe_A3613.